Consider the following 381-residue polypeptide: Neutral protease 2 homolog mep20 (381 aa).

A signal peptide spans 1–19; that stretch reads MRFTALASAILPLACNVLA. Positions 20–193 are excised as a propeptide; that stretch reads LPAKTGEAPK…ASAVKPLDKR (174 aa). Intrachain disulfides connect cysteine 199/cysteine 271 and cysteine 278/cysteine 296. Position 321 (histidine 321) interacts with Zn(2+). The active site involves glutamate 322. Zn(2+)-binding residues include histidine 325 and aspartate 336.

It belongs to the peptidase M35 family. Zn(2+) serves as cofactor.

It catalyses the reaction Preferential cleavage of bonds with hydrophobic residues in P1'. Also 3-Asn-|-Gln-4 and 8-Gly-|-Ser-9 bonds in insulin B chain.. In terms of biological role, secreted metalloproteinase that allows assimilation of proteinaceous substrates. Shows high activities on basic nuclear substrates such as histone and protamine. This is Neutral protease 2 homolog mep20 (mep20) from Aspergillus flavus.